Consider the following 371-residue polypeptide: Peptide chain release factor 2 (371 aa).

N5-methylglutamine is present on Q250.

The protein belongs to the prokaryotic/mitochondrial release factor family. In terms of processing, methylated by PrmC. Methylation increases the termination efficiency of RF2.

The protein localises to the cytoplasm. Peptide chain release factor 2 directs the termination of translation in response to the peptide chain termination codons UGA and UAA. In Paramagnetospirillum magneticum (strain ATCC 700264 / AMB-1) (Magnetospirillum magneticum), this protein is Peptide chain release factor 2.